The sequence spans 1225 residues: uncharacterized protein (1225 aa).

Residues 1-27 (MKRFLHRVKWPLLLSSIAVSLGIVAVA) form the signal peptide. C28 carries N-palmitoyl cysteine lipidation. C28 is lipidated: S-diacylglycerol cysteine. Residues 995–1014 (QSEKSSSNGGQAQLQSTQSS) are disordered.

The protein belongs to the MG307/MG309/MG338 family.

It is found in the cell membrane. This is an uncharacterized protein from Mycoplasma genitalium (strain ATCC 33530 / DSM 19775 / NCTC 10195 / G37) (Mycoplasmoides genitalium).